A 337-amino-acid polypeptide reads, in one-letter code: Lipopolysaccharide 1,3-galactosyltransferase (337 aa).

UDP contacts are provided by residues 33 to 38 (GIDKNF) and 130 to 131 (DA). Mg(2+) contacts are provided by Asp-130 and Asp-132. Short sequence motifs (DXD) lie at residues 130–132 (DAD) and 219–221 (DQD). His-264 serves as a coordination point for Mg(2+). 264–270 (HYIGPTK) is a UDP binding site.

It belongs to the glycosyltransferase 8 family. Mg(2+) serves as cofactor.

The enzyme catalyses UDP-alpha-D-galactose + [lipopolysaccharide] = UDP + 3-alpha-D-galactosyl-[lipopolysaccharide].. It functions in the pathway bacterial outer membrane biogenesis; LPS core biosynthesis. Its activity is regulated as follows. Inhibited in a competitive manner by closely related nonsubstrate lipopolysaccharides. Its function is as follows. Galactosyltransferase involved in the biosynthesis of the core oligosaccharide region of lipopolysaccharide (LPS). Catalyzes the addition of an alpha l,3-linked galactose (galactose I) to the first outer-core glucose (glucose I). Cannot use UDP-glucose. Activity probably does not require the branched galactose added by WaaB, but it is higher in the presence of this branched galactose. The chain is Lipopolysaccharide 1,3-galactosyltransferase from Salmonella typhimurium (strain LT2 / SGSC1412 / ATCC 700720).